A 379-amino-acid polypeptide reads, in one-letter code: Succinyl-diaminopimelate desuccinylase (379 aa).

His70 contributes to the Zn(2+) binding site. Asp72 is an active-site residue. Asp103 contributes to the Zn(2+) binding site. The active-site Proton acceptor is Glu137. Zn(2+)-binding residues include Glu138, Glu166, and His352.

The protein belongs to the peptidase M20A family. DapE subfamily. In terms of assembly, homodimer. Zn(2+) serves as cofactor. It depends on Co(2+) as a cofactor.

It catalyses the reaction N-succinyl-(2S,6S)-2,6-diaminopimelate + H2O = (2S,6S)-2,6-diaminopimelate + succinate. It functions in the pathway amino-acid biosynthesis; L-lysine biosynthesis via DAP pathway; LL-2,6-diaminopimelate from (S)-tetrahydrodipicolinate (succinylase route): step 3/3. Its function is as follows. Catalyzes the hydrolysis of N-succinyl-L,L-diaminopimelic acid (SDAP), forming succinate and LL-2,6-diaminopimelate (DAP), an intermediate involved in the bacterial biosynthesis of lysine and meso-diaminopimelic acid, an essential component of bacterial cell walls. In Shewanella putrefaciens (strain CN-32 / ATCC BAA-453), this protein is Succinyl-diaminopimelate desuccinylase.